The primary structure comprises 598 residues: NADH-quinone oxidoreductase subunit C/D (598 aa).

The NADH dehydrogenase I subunit C stretch occupies residues 1–189; that stretch reads MTDSTTHDRE…DPFELTRQKQ (189 aa). An NADH dehydrogenase I subunit D region spans residues 213-598; the sequence is DFMFLNLGPN…IDFVMSDVDR (386 aa).

The protein in the N-terminal section; belongs to the complex I 30 kDa subunit family. This sequence in the C-terminal section; belongs to the complex I 49 kDa subunit family. NDH-1 is composed of 13 different subunits. Subunits NuoB, CD, E, F, and G constitute the peripheral sector of the complex.

It is found in the cell inner membrane. The enzyme catalyses a quinone + NADH + 5 H(+)(in) = a quinol + NAD(+) + 4 H(+)(out). In terms of biological role, NDH-1 shuttles electrons from NADH, via FMN and iron-sulfur (Fe-S) centers, to quinones in the respiratory chain. The immediate electron acceptor for the enzyme in this species is believed to be ubiquinone. Couples the redox reaction to proton translocation (for every two electrons transferred, four hydrogen ions are translocated across the cytoplasmic membrane), and thus conserves the redox energy in a proton gradient. In Edwardsiella ictaluri (strain 93-146), this protein is NADH-quinone oxidoreductase subunit C/D.